Here is a 191-residue protein sequence, read N- to C-terminus: Phosphoheptose isomerase (191 aa).

Positions 37–191 (ITSSLKQGGK…LILLIEQSLL (155 aa)) constitute an SIS domain. 52–54 (NGG) contributes to the substrate binding site. Residues histidine 61 and glutamate 65 each coordinate Zn(2+). Substrate-binding positions include glutamate 65, 93-94 (ND), 119-121 (STS), serine 124, and glutamine 172. Zn(2+)-binding residues include glutamine 172 and histidine 180.

This sequence belongs to the SIS family. GmhA subfamily. Zn(2+) serves as cofactor.

It localises to the cytoplasm. The catalysed reaction is 2 D-sedoheptulose 7-phosphate = D-glycero-alpha-D-manno-heptose 7-phosphate + D-glycero-beta-D-manno-heptose 7-phosphate. The protein operates within carbohydrate biosynthesis; D-glycero-D-manno-heptose 7-phosphate biosynthesis; D-glycero-alpha-D-manno-heptose 7-phosphate and D-glycero-beta-D-manno-heptose 7-phosphate from sedoheptulose 7-phosphate: step 1/1. In terms of biological role, catalyzes the isomerization of sedoheptulose 7-phosphate in D-glycero-D-manno-heptose 7-phosphate. The polypeptide is Phosphoheptose isomerase (Cytophaga hutchinsonii (strain ATCC 33406 / DSM 1761 / CIP 103989 / NBRC 15051 / NCIMB 9469 / D465)).